We begin with the raw amino-acid sequence, 109 residues long: Large ribosomal subunit protein uL22 (109 aa).

It belongs to the universal ribosomal protein uL22 family. As to quaternary structure, part of the 50S ribosomal subunit.

In terms of biological role, this protein binds specifically to 23S rRNA; its binding is stimulated by other ribosomal proteins, e.g. L4, L17, and L20. It is important during the early stages of 50S assembly. It makes multiple contacts with different domains of the 23S rRNA in the assembled 50S subunit and ribosome. Functionally, the globular domain of the protein is located near the polypeptide exit tunnel on the outside of the subunit, while an extended beta-hairpin is found that lines the wall of the exit tunnel in the center of the 70S ribosome. In Wolinella succinogenes (strain ATCC 29543 / DSM 1740 / CCUG 13145 / JCM 31913 / LMG 7466 / NCTC 11488 / FDC 602W) (Vibrio succinogenes), this protein is Large ribosomal subunit protein uL22.